The following is a 167-amino-acid chain: uncharacterized protein (167 aa).

The signal sequence occupies residues 1–23; the sequence is MKRLHKRFLLATFCALFTATLQA. Cysteines 39 and 77 form a disulfide.

This sequence belongs to the fimbrial protein family.

Its subcellular location is the fimbrium. This is an uncharacterized protein from Escherichia coli (strain K12).